A 123-amino-acid chain; its full sequence is Large ribosomal subunit protein uL29 (123 aa).

The protein belongs to the universal ribosomal protein uL29 family. In terms of assembly, component of the large ribosomal subunit.

The protein localises to the cytoplasm. Its function is as follows. Component of the large ribosomal subunit. The ribosome is a large ribonucleoprotein complex responsible for the synthesis of proteins in the cell. The protein is Large ribosomal subunit protein uL29 (rpl35) of Hippocampus comes (Tiger tail seahorse).